The sequence spans 423 residues: Protein CLP1 homolog (423 aa).

ATP contacts are provided by residues glutamate 19, lysine 60, and 122-127 (DVGKTT).

Belongs to the Clp1 family. Clp1 subfamily.

The protein resides in the nucleus. Its function is as follows. Required for endonucleolytic cleavage during polyadenylation-dependent pre-mRNA 3'-end formation. This is Protein CLP1 homolog (cbc) from Culex quinquefasciatus (Southern house mosquito).